A 388-amino-acid polypeptide reads, in one-letter code: Acyl-CoA dehydrogenase fadE12 (388 aa).

This sequence belongs to the acyl-CoA dehydrogenase family. It depends on FAD as a cofactor.

It carries out the reaction a 2,3-saturated acyl-CoA + A = a 2,3-dehydroacyl-CoA + AH2. The polypeptide is Acyl-CoA dehydrogenase fadE12 (fadE12) (Mycobacterium tuberculosis (strain CDC 1551 / Oshkosh)).